The sequence spans 375 residues: Growth/differentiation factor 8 (375 aa).

The N-terminal stretch at 1–18 (MQRLQICVYIYLFVLIVA) is a signal peptide. The propeptide occupies 19–266 (GPVDLSENSE…VTDTPKRSRR (248 aa)). The N-linked (GlcNAc...) asparagine glycan is linked to asparagine 71. 4 disulfides stabilise this stretch: cysteine 272/cysteine 282, cysteine 281/cysteine 340, cysteine 309/cysteine 372, and cysteine 313/cysteine 374.

The protein belongs to the TGF-beta family. As to quaternary structure, homodimer; disulfide-linked. Interacts with WFIKKN2, leading to inhibit its activity. Interacts with FSTL3. In terms of processing, synthesized as large precursor molecule that undergoes proteolytic cleavage to generate an N-terminal propeptide and a disulfide linked C-terminal dimer, which is the biologically active molecule. The circulating form consists of a latent complex of the C-terminal dimer and other proteins, including its propeptide, which maintain the C-terminal dimer in a latent, inactive state. Ligand activation requires additional cleavage of the prodomain by a tolloid-like metalloproteinase.

The protein resides in the secreted. Acts specifically as a negative regulator of skeletal muscle growth. The sequence is that of Growth/differentiation factor 8 (MSTN) from Canis lupus familiaris (Dog).